An 89-amino-acid chain; its full sequence is Small ribosomal subunit protein uS15 (89 aa).

This sequence belongs to the universal ribosomal protein uS15 family. In terms of assembly, part of the 30S ribosomal subunit. Forms a bridge to the 50S subunit in the 70S ribosome, contacting the 23S rRNA.

In terms of biological role, one of the primary rRNA binding proteins, it binds directly to 16S rRNA where it helps nucleate assembly of the platform of the 30S subunit by binding and bridging several RNA helices of the 16S rRNA. Functionally, forms an intersubunit bridge (bridge B4) with the 23S rRNA of the 50S subunit in the ribosome. The polypeptide is Small ribosomal subunit protein uS15 (Cereibacter sphaeroides (strain ATCC 17023 / DSM 158 / JCM 6121 / CCUG 31486 / LMG 2827 / NBRC 12203 / NCIMB 8253 / ATH 2.4.1.) (Rhodobacter sphaeroides)).